Here is a 359-residue protein sequence, read N- to C-terminus: Heme A synthase (359 aa).

The next 5 membrane-spanning stretches (helical) occupy residues isoleucine 8–glycine 28, leucine 94–lysine 114, leucine 124–serine 144, glycine 159–isoleucine 179, and isoleucine 215–alanine 235. Histidine 274 provides a ligand contact to heme. A run of 3 helical transmembrane segments spans residues tryptophan 276–asparagine 296, methionine 303–valine 323, and isoleucine 328–isoleucine 348. Histidine 334 serves as a coordination point for heme.

It belongs to the COX15/CtaA family. Type 2 subfamily. As to quaternary structure, interacts with CtaB. It depends on heme b as a cofactor.

It localises to the cell membrane. It carries out the reaction Fe(II)-heme o + 2 A + H2O = Fe(II)-heme a + 2 AH2. It functions in the pathway porphyrin-containing compound metabolism; heme A biosynthesis; heme A from heme O: step 1/1. Functionally, catalyzes the conversion of heme O to heme A by two successive hydroxylations of the methyl group at C8. The first hydroxylation forms heme I, the second hydroxylation results in an unstable dihydroxymethyl group, which spontaneously dehydrates, resulting in the formyl group of heme A. The polypeptide is Heme A synthase (Orientia tsutsugamushi (strain Ikeda) (Rickettsia tsutsugamushi)).